The chain runs to 245 residues: Ribosomal RNA small subunit methyltransferase G (245 aa).

S-adenosyl-L-methionine is bound by residues Gly90, Leu95, 140–141 (AE), and Arg158.

Belongs to the methyltransferase superfamily. RNA methyltransferase RsmG family.

It localises to the cytoplasm. Functionally, specifically methylates the N7 position of guanine in position 518 of 16S rRNA. The sequence is that of Ribosomal RNA small subunit methyltransferase G from Mycobacterium leprae (strain TN).